The primary structure comprises 254 residues: 3-deoxy-manno-octulosonate cytidylyltransferase (254 aa).

This sequence belongs to the KdsB family.

It is found in the cytoplasm. The catalysed reaction is 3-deoxy-alpha-D-manno-oct-2-ulosonate + CTP = CMP-3-deoxy-beta-D-manno-octulosonate + diphosphate. The protein operates within nucleotide-sugar biosynthesis; CMP-3-deoxy-D-manno-octulosonate biosynthesis; CMP-3-deoxy-D-manno-octulosonate from 3-deoxy-D-manno-octulosonate and CTP: step 1/1. It participates in bacterial outer membrane biogenesis; lipopolysaccharide biosynthesis. Functionally, activates KDO (a required 8-carbon sugar) for incorporation into bacterial lipopolysaccharide in Gram-negative bacteria. The polypeptide is 3-deoxy-manno-octulosonate cytidylyltransferase (Bordetella petrii (strain ATCC BAA-461 / DSM 12804 / CCUG 43448)).